Consider the following 472-residue polypeptide: Tryptophanase (472 aa).

K270 carries the N6-(pyridoxal phosphate)lysine modification.

Belongs to the beta-eliminating lyase family. In terms of assembly, homotetramer. Requires pyridoxal 5'-phosphate as cofactor.

The catalysed reaction is L-tryptophan + H2O = indole + pyruvate + NH4(+). The protein operates within amino-acid degradation; L-tryptophan degradation via pyruvate pathway; indole and pyruvate from L-tryptophan: step 1/1. The polypeptide is Tryptophanase (Haemophilus influenzae (strain 86-028NP)).